We begin with the raw amino-acid sequence, 204 residues long: MTKILLTGFEPFLDYKLNPTMQIVENLDGEKIENYHIIGRILSVDFQQSAEQLKRHIEEIEPQIIISLGLAGGRFKITPERIAINIKDGEPDNNGYSPVDESIQEEGADAYLTNLPIRHMINRLQEEGYPAEISNTAGTYLCNNIMYEGLVYAQQHEGVRAGFIHIPASFELAIQHGKIPGWHIRDLIAAVKLCIEETVRAGNH.

Active-site residues include glutamate 80, cysteine 142, and histidine 165.

It belongs to the peptidase C15 family. As to quaternary structure, homotetramer.

The protein localises to the cytoplasm. It catalyses the reaction Release of an N-terminal pyroglutamyl group from a polypeptide, the second amino acid generally not being Pro.. Functionally, removes 5-oxoproline from various penultimate amino acid residues except L-proline. The chain is Pyrrolidone-carboxylate peptidase from Lysinibacillus sphaericus (strain C3-41).